We begin with the raw amino-acid sequence, 668 residues long: Tyrosine-protein phosphatase non-receptor type ptp-2 (668 aa).

SH2 domains are found at residues 10–113 (NFYY…KKPV) and 134–232 (WWHG…EEPL). The 317-residue stretch at 264–580 (ISEEFDRLSQ…QFLYKALAFY (317 aa)) folds into the Tyrosine-protein phosphatase domain. Cysteine 518 functions as the Phosphocysteine intermediate in the catalytic mechanism. Residues 603 to 668 (PRRLRPTPNA…SSTLLKSTKK (66 aa)) are disordered. Composition is skewed to low complexity over residues 616-634 (SSAR…SSRT) and 652-668 (STSS…STKK).

This sequence belongs to the protein-tyrosine phosphatase family. Non-receptor class 2 subfamily. As to expression, expressed in embryonic cells, developing vulva, body wall muscles, head neurons and gonadal sheath cells.

It is found in the cytoplasm. It catalyses the reaction O-phospho-L-tyrosyl-[protein] + H2O = L-tyrosyl-[protein] + phosphate. In terms of biological role, involved in embryonic and larval development. Plays a role in oogenesis by regulating mpk-1 phosphorylation and oocyte maturation in response to major sperm protein (MSP). During the formation of neuromuscular junctions at the larval stage, negatively regulates membrane protrusion from body wall muscles probably downstream of receptor egl-15. Plays a role in fluid homeostasis probably downstream of receptor egl-15 and adapter soc-1. Promotes vulva induction and negatively regulates fertility probably downstream of receptor let-23. Negatively regulates daf-2-mediated repression of dauer formation. In Caenorhabditis elegans, this protein is Tyrosine-protein phosphatase non-receptor type ptp-2.